Consider the following 689-residue polypeptide: Solute carrier family 22 member 23 (689 aa).

Disordered regions lie at residues 1-55 (MAID…PLPA) and 162-188 (TASW…GKGN). N24 carries N-linked (GlcNAc...) asparagine glycosylation. Residues 165–177 (WGTTSNRSNSSDT) show a composition bias toward polar residues. The next 2 membrane-spanning stretches (helical) occupy residues 229–249 (FSLL…ADWV) and 253–273 (PVLL…ALSV). N-linked (GlcNAc...) asparagine glycosylation is present at N274. A run of 8 helical transmembrane segments spans residues 283 to 303 (FFEG…RIEL), 310 to 330 (FIIT…MPGL), 339 to 359 (VLQA…SIFP), 462 to 482 (ADYY…CLVV), 489 to 509 (GGLL…LGLL), 541 to 561 (IAFS…SVFF), 572 to 592 (CGGL…APII), and 601 to 621 (FLHH…ILLL).

Belongs to the major facilitator (TC 2.A.1) superfamily. Organic cation transporter (TC 2.A.1.19) family. As to expression, expressed in many tissues, including brain, spinal cord, kidney, liver, eye, adipose tissue, lung, epididymis, adrenal gland, pineal gland, skeletal muscle, heart, spleen, thymus, ovary, uterus, testis and epididymis.

It is found in the membrane. The chain is Solute carrier family 22 member 23 (Slc22a23) from Rattus norvegicus (Rat).